The sequence spans 367 residues: MKNAYLLLTPGPLSTSESVREAMLKDWCTWDDDYNLEIVEVIRRKLVTLATTQSGYTSVLMQGSGTASVEATIGSVMLPTDKLLVIDNGAYGARIAQIAQYLNIACRVIAPGETAQPNLDEIADVLTHDPAITHVAIVHCETTTGMLNPIAEVAKIAKQHGKRVILDAMSSFGGIPMDIGALGIDFMISSANKCIQGVPGFGFVIAKRSELEQCQGRARSLTLDLFDQWQCMEKNHGKWRFTSPTHTVRAFYQALLELESEGGIAARYQRYQTNQTQLVKGMRELGFAPLLPEKLHSPIITSFYSPEHSDYQFAEFYQRLKQQGFVIYPGKVSHADCFRIGNIGEVYPQDIERLLSAMQHAIYWQQA.

Lysine 193 carries the post-translational modification N6-(pyridoxal phosphate)lysine.

Belongs to the class-V pyridoxal-phosphate-dependent aminotransferase family. PhnW subfamily. As to quaternary structure, homodimer. Pyridoxal 5'-phosphate serves as cofactor.

It catalyses the reaction (2-aminoethyl)phosphonate + pyruvate = phosphonoacetaldehyde + L-alanine. Its function is as follows. Involved in phosphonate degradation. The chain is 2-aminoethylphosphonate--pyruvate transaminase from Vibrio cholerae serotype O1 (strain ATCC 39541 / Classical Ogawa 395 / O395).